Reading from the N-terminus, the 252-residue chain is tRNA (guanine-N(1)-)-methyltransferase (252 aa).

Residues Gly116 and 135-140 each bind S-adenosyl-L-methionine; that span reads LGDYVL.

This sequence belongs to the RNA methyltransferase TrmD family. Homodimer.

It is found in the cytoplasm. It catalyses the reaction guanosine(37) in tRNA + S-adenosyl-L-methionine = N(1)-methylguanosine(37) in tRNA + S-adenosyl-L-homocysteine + H(+). In terms of biological role, specifically methylates guanosine-37 in various tRNAs. This is tRNA (guanine-N(1)-)-methyltransferase from Limosilactobacillus reuteri (strain DSM 20016) (Lactobacillus reuteri).